The sequence spans 343 residues: MAKLKVGINGFGRIGRLVLRAGINNPNIEFVGINDLVPPDNLAYLLKYDSTHGKLRSQVEAKDDGIVIDGHFIPCVSVRNPAELPWGKLGADYVVESTGLFTDSEGASKHLQAGAKRVIISAPTKDPDRVRTLLVGVNHDLFDPSKDVIVSNASCTTNCLAPIAKVINDNFGLTEGLMTTVHAMTATQPTVDGPSKKDWRGGRGAAQNIIPSSTGAAKAVALVLPELKGKLTGMAFRVPTPDVSVVDLTFKTAKATSYKEICAAMKQASEGSLAGILGYTDEEVVSTDFQGDTHSSIFDAGAGIELNSNFFKVVAWYDNEWGYSNRVVDLMLSMIQKEQLAAV.

NAD(+)-binding positions include 13-14 (RI), Asp35, Arg79, and Ser121. D-glyceraldehyde 3-phosphate is bound by residues 154–156 (SCT), Thr185, 214–215 (TG), and Arg237. Catalysis depends on Cys155, which acts as the Nucleophile. Asn319 serves as a coordination point for NAD(+).

It belongs to the glyceraldehyde-3-phosphate dehydrogenase family. In terms of assembly, homotetramer.

The protein localises to the cytoplasm. It catalyses the reaction D-glyceraldehyde 3-phosphate + phosphate + NAD(+) = (2R)-3-phospho-glyceroyl phosphate + NADH + H(+). The protein operates within carbohydrate degradation; glycolysis; pyruvate from D-glyceraldehyde 3-phosphate: step 1/5. Its function is as follows. Catalyzes the oxidative phosphorylation of glyceraldehyde 3-phosphate (G3P) to 1,3-bisphosphoglycerate (BPG) using the cofactor NAD. The first reaction step involves the formation of a hemiacetal intermediate between G3P and a cysteine residue, and this hemiacetal intermediate is then oxidized to a thioester, with concomitant reduction of NAD to NADH. The reduced NADH is then exchanged with the second NAD, and the thioester is attacked by a nucleophilic inorganic phosphate to produce BPG. The polypeptide is Glyceraldehyde-3-phosphate dehydrogenase 1 (gap1) (Trichormus variabilis (strain ATCC 29413 / PCC 7937) (Anabaena variabilis)).